Reading from the N-terminus, the 514-residue chain is Ankyrin repeat domain-containing protein 34B (514 aa).

ANK repeat units follow at residues Ser-9–Glu-38, Arg-42–Ile-79, Ser-83–Leu-113, and Ser-117–Lys-146. The tract at residues Asn-220–Val-249 is disordered. Ser-263 carries the phosphoserine modification. Thr-272 bears the Phosphothreonine mark. Ser-296 carries the post-translational modification Phosphoserine.

It belongs to the ANKRD34 family. Post-translationally, phosphorylated.

It localises to the cytoplasm. Its subcellular location is the nucleus. The polypeptide is Ankyrin repeat domain-containing protein 34B (ANKRD34B) (Homo sapiens (Human)).